We begin with the raw amino-acid sequence, 377 residues long: MSKGRVNQKRYKYPLPIHPVDDLPELILHNPLSWLYWAYRYYKSTNALNDKVHVDFIGDTTLHITVQDDKQMLYLWNNGFFGTGQFSRSEPTWKARTEARLGLNDTPLHNRGGTKSNTETEMTLEKVTQQRRLQRLEFKKERAKLERELLELRKKGGHIDEENILLEKQRESLRKFKLKQTEDVGIVAQQQDISESNLRDEDNNLLDENGDLLPLESLELMPVEAMFLTFALPVLDISPACLAGKLFQFDAKYKDIHSFVRSYVIYHHYRSHGWCVRSGIKFGCDYLLYKRGPPFQHAEFCVMGLDHDVSKDYTWYSSIARVVGGAKKTFVLCYVERLISEQEAIALWKSNNFTKLFNSFQVGEVLYKRWVPGRNRD.

Positions 119-174 (ETEMTLEKVTQQRRLQRLEFKKERAKLERELLELRKKGGHIDEENILLEKQRESLR) form a coiled coil. Catalysis depends on residues Tyr289, His297, and Lys328.

This sequence belongs to the tRNA-intron endonuclease family. As to quaternary structure, heterotetramer composed of SEN2, SEN15, SEN34 and SEN54. Interacts directly with SEN54.

The protein resides in the nucleus. It localises to the endomembrane system. The protein localises to the mitochondrion outer membrane. It catalyses the reaction pretRNA = a 3'-half-tRNA molecule with a 5'-OH end + a 5'-half-tRNA molecule with a 2',3'-cyclic phosphate end + an intron with a 2',3'-cyclic phosphate and a 5'-hydroxyl terminus.. Functionally, constitutes one of the two catalytic subunit of the tRNA-splicing endonuclease complex, a complex responsible for identification and cleavage of the splice sites in pre-tRNA. It cleaves pre-tRNA at the 5'- and 3'-splice sites to release the intron. The products are an intron and two tRNA half-molecules bearing 2',3'-cyclic phosphate and 5'-OH termini. There are no conserved sequences at the splice sites, but the intron is invariably located at the same site in the gene, placing the splice sites an invariant distance from the constant structural features of the tRNA body. This subunit may anchor the endonuclease complex to the nuclear membrane. Probably carries the active site for 5'-splice site cleavage. The protein is tRNA-splicing endonuclease subunit SEN2 (SEN2) of Saccharomyces cerevisiae (strain ATCC 204508 / S288c) (Baker's yeast).